The chain runs to 329 residues: Interleukin-12 subunit beta (329 aa).

The N-terminal stretch at 1–22 (MHPQQLVIAWLSLVLLAPPLMA) is a signal peptide. Residues 23-106 (IWELEKNVYV…LSHSFLLIHK (84 aa)) enclose the Ig-like C2-type domain. Cys-50 and Cys-90 form a disulfide bridge. N-linked (GlcNAc...) asparagine glycosylation is found at Asn-135 and Asn-223. The 92-residue stretch at 238–329 (PPKNLQLKPL…WSNWASVSCS (92 aa)) folds into the Fibronectin type-III domain.

The protein belongs to the IL-12B family. Heterodimer with IL12A; disulfide-linked. The heterodimer is known as interleukin IL-12. Heterodimer with IL23A; disulfide-linked. The heterodimer is known as interleukin IL-23. Also secreted as a monomer. Interacts with NBR1; this interaction promotes IL-12 secretion.

It is found in the secreted. Cytokine that can act as a growth factor for activated T and NK cells, enhance the lytic activity of NK/lymphokine-activated killer cells, and stimulate the production of IFN-gamma by resting PBMC. Functionally, associates with IL23A to form the IL-23 interleukin, a heterodimeric cytokine which functions in innate and adaptive immunity. IL-23 may constitute with IL-17 an acute response to infection in peripheral tissues. IL-23 binds to a heterodimeric receptor complex composed of IL12RB1 and IL23R, activates the Jak-Stat signaling cascade, stimulates memory rather than naive T-cells and promotes production of pro-inflammatory cytokines. IL-23 induces autoimmune inflammation and thus may be responsible for autoimmune inflammatory diseases and may be important for tumorigenesis. This Felis catus (Cat) protein is Interleukin-12 subunit beta (IL12B).